Consider the following 446-residue polypeptide: Glycogen synthase (446 aa).

ADP-alpha-D-glucose is bound at residue R15.

Belongs to the glycosyltransferase 1 family. Bacterial/plant glycogen synthase subfamily.

It carries out the reaction [(1-&gt;4)-alpha-D-glucosyl](n) + ADP-alpha-D-glucose = [(1-&gt;4)-alpha-D-glucosyl](n+1) + ADP + H(+). It participates in glycan biosynthesis; glycogen biosynthesis. Synthesizes alpha-1,4-glucan chains using ADP-glucose. The polypeptide is Glycogen synthase (Deinococcus deserti (strain DSM 17065 / CIP 109153 / LMG 22923 / VCD115)).